The chain runs to 548 residues: Membrane protein insertase YidC (548 aa).

The helical transmembrane segment at 6–26 (NLLVIALLFVSFMIWQAWEQD) threads the bilayer. The segment at 28 to 55 (NPQPQAQQTTQTTTTAAGSAADQGVPAS) is disordered. The span at 30-50 (QPQAQQTTQTTTTAAGSAADQ) shows a compositional bias: low complexity. A run of 4 helical transmembrane segments spans residues 350 to 370 (FVGNWGFSIIIITFIVRGIMY), 420 to 440 (LGGCFPLLIQMPIFLALYYML), 458 to 478 (LSAQDPYYILPILMGVTMFFI), and 499 to 519 (PVIFTVFFLWFPSGLVLYYIV).

This sequence belongs to the OXA1/ALB3/YidC family. Type 1 subfamily. In terms of assembly, interacts with the Sec translocase complex via SecD. Specifically interacts with transmembrane segments of nascent integral membrane proteins during membrane integration.

It localises to the cell inner membrane. Functionally, required for the insertion and/or proper folding and/or complex formation of integral membrane proteins into the membrane. Involved in integration of membrane proteins that insert both dependently and independently of the Sec translocase complex, as well as at least some lipoproteins. Aids folding of multispanning membrane proteins. This chain is Membrane protein insertase YidC, found in Escherichia coli O139:H28 (strain E24377A / ETEC).